Here is a 93-residue protein sequence, read N- to C-terminus: MPEKALVTLRFGPYSSSSGLVDHRVSRLQGLRAVLVSDGHQVILEEILDRNTVELIVNGELVFRCNIKELDFGGDGQLDPLCEEARKAVKDAY.

Belongs to the UPF0728 family.

The sequence is that of UPF0728 protein C10orf53 homolog from Xenopus tropicalis (Western clawed frog).